The following is a 735-amino-acid chain: Trafficking protein particle complex subunit 12 (735 aa).

2 disordered regions span residues 1–204 (MEDA…QPSP) and 237–276 (NPGA…PPAS). Residues 13-22 (PEAPHPPQLA) show a composition bias toward pro residues. Positions 34 to 50 (ETIDLGGDEFGSEENET) are enriched in acidic residues. S109 and S184 each carry phosphoserine. TPR repeat units follow at residues 545–578 (GRVM…YPEQ), 580–613 (PQLL…TQKL), 620–653 (IMVL…DPRN), and 654–687 (AVAN…DPRH).

Component of the multisubunit TRAPP (transport protein particle) complex, which includes at least TRAPPC2, TRAPPC2L, TRAPPC3, TRAPPC3L, TRAPPC4, TRAPPC5, TRAPPC8, TRAPPC9, TRAPPC10, TRAPPC11 and TRAPPC12. Interacts with CENPE. Phosphorylated as the cells enter mitosis but is dephosphorylated at or before the onset of anaphase. The phosphorylated form recruits CENPE to kinetochores more efficiently than the non-phosphorylated form.

The protein resides in the endoplasmic reticulum-Golgi intermediate compartment. It localises to the nucleus. Functionally, component of the TRAPP complex, which is involved in endoplasmic reticulum to Golgi apparatus trafficking at a very early stage. Also plays a role in chromosome congression, kinetochore assembly and stability and controls the recruitment of CENPE to the kinetochores. The protein is Trafficking protein particle complex subunit 12 of Homo sapiens (Human).